Consider the following 216-residue polypeptide: MSLAPSPLVGETPLHAVEVRILGCLIEKQLTTPETYPLTLNAVQLACNQKTSREPLMQLETGEVGRYLRSLEGRKLVHLVMGSRADRWEQRCDKQLELVKPQTVLLGLLMLRGPQTLNELLTRSNRMHDFDDVDEVQHQLERLIARGLAVLLPRQSGQREDRYMHLLGEPADLESLLLSRPASRGDASAPSEDRLVELEARIAALEERLARLEGAQ.

The protein belongs to the UPF0502 family.

This Ectopseudomonas mendocina (strain ymp) (Pseudomonas mendocina) protein is UPF0502 protein Pmen_2627.